We begin with the raw amino-acid sequence, 367 residues long: MSFRTLELFAGIAGISHGLRGISTPVAFVEINEDAQKFLKTKFSDASVFNDVTKFTKSDFPEDIDMITAGFPCTGFSIAGSRTGFEHKESGLFADVVRITEEYKPKIVFLENSHMLSHTYNLDVVVKKMDEIGYFCKWVTCRASIIGAHHQRHRWFCLAIRKDYEPEEIIVSVNATKFDWENNEPPCQVDNKSYENSTLVRLAGYSVVPDQIRYAFTGLFTGDFESSWKTTLTPGTIIGTEHKKMKGTYDKVINGYYENDVYYSFSRKEVHRAPLNISVKPRDIPEKHNGKTLVDREMIKKYWCTPCASYGTATAGCNVLTDRQSHALPTQVRFSYRGVCGRHLSGIWCAWLMGYDQEYLGYLVQYD.

Residues F3 to D367 enclose the SAM-dependent MTase C5-type domain. C73 is a catalytic residue.

It belongs to the class I-like SAM-binding methyltransferase superfamily. C5-methyltransferase family.

It carries out the reaction a 2'-deoxycytidine in DNA + S-adenosyl-L-methionine = a 5-methyl-2'-deoxycytidine in DNA + S-adenosyl-L-homocysteine + H(+). In terms of biological role, a methylase that recognizes the double-stranded sequence 5'-RGCY-3', methylates C-3 on both strands, and protects the DNA from cleavage by the CviJI endonuclease. The chain is Type II methyltransferase M.CviJI from Chlorella (PBCV-IL3A).